Consider the following 170-residue polypeptide: Large ribosomal subunit protein uL10 (170 aa).

Belongs to the universal ribosomal protein uL10 family. As to quaternary structure, part of the ribosomal stalk of the 50S ribosomal subunit. The N-terminus interacts with L11 and the large rRNA to form the base of the stalk. The C-terminus forms an elongated spine to which L12 dimers bind in a sequential fashion forming a multimeric L10(L12)X complex.

Its function is as follows. Forms part of the ribosomal stalk, playing a central role in the interaction of the ribosome with GTP-bound translation factors. This chain is Large ribosomal subunit protein uL10, found in Chlamydia abortus (strain DSM 27085 / S26/3) (Chlamydophila abortus).